Here is a 53-residue protein sequence, read N- to C-terminus: UPF0391 membrane protein Meso_3392 (53 aa).

2 helical membrane passes run W4–A24 and I33–A53.

It belongs to the UPF0391 family.

It is found in the cell membrane. The sequence is that of UPF0391 membrane protein Meso_3392 from Chelativorans sp. (strain BNC1).